The following is a 222-amino-acid chain: Thiopurine S-methyltransferase (222 aa).

Residues Trp-10, Leu-45, Glu-66, and Arg-123 each coordinate S-adenosyl-L-methionine.

This sequence belongs to the class I-like SAM-binding methyltransferase superfamily. TPMT family.

The protein resides in the cytoplasm. The catalysed reaction is S-adenosyl-L-methionine + a thiopurine = S-adenosyl-L-homocysteine + a thiopurine S-methylether.. This chain is Thiopurine S-methyltransferase, found in Pseudomonas fluorescens (strain ATCC BAA-477 / NRRL B-23932 / Pf-5).